Here is a 351-residue protein sequence, read N- to C-terminus: Fe(3+) ions import ATP-binding protein FbpC (351 aa).

One can recognise an ABC transporter domain in the interval 7–237; it reads VVLKNVCKRF…PSSMFMANFM (231 aa). 39 to 46 serves as a coordination point for ATP; sequence GPSGCGKT.

Belongs to the ABC transporter superfamily. Fe(3+) ion importer (TC 3.A.1.10) family. In terms of assembly, the complex is composed of two ATP-binding proteins (FbpC), two transmembrane proteins (FbpB) and a solute-binding protein (FbpA).

It localises to the cell inner membrane. The catalysed reaction is Fe(3+)(out) + ATP + H2O = Fe(3+)(in) + ADP + phosphate + H(+). Its function is as follows. Part of the ABC transporter complex FbpABC involved in Fe(3+) ions import. Responsible for energy coupling to the transport system. The protein is Fe(3+) ions import ATP-binding protein FbpC of Photobacterium profundum (strain SS9).